The primary structure comprises 463 residues: Argininosuccinate lyase (463 aa).

It belongs to the lyase 1 family. Argininosuccinate lyase subfamily.

Its subcellular location is the cytoplasm. It catalyses the reaction 2-(N(omega)-L-arginino)succinate = fumarate + L-arginine. Its pathway is amino-acid biosynthesis; L-arginine biosynthesis; L-arginine from L-ornithine and carbamoyl phosphate: step 3/3. The sequence is that of Argininosuccinate lyase from Bradyrhizobium sp. (strain ORS 278).